The following is a 400-amino-acid chain: MAPPNTIDAGLTQRHITTTAAPTSAKPAFERNYQLPEFTIKEIRECIPAHCFERSGLRGLCHVAIDLTWASLLFLAATQIDKFENPLIRYLAWPAYWIMQGIVCTGIWVLAHECGHQSFSTSKTLNNTVGWILHSMLLVPYHSWRISHSKHHKATGHMTKDQVFVPKTRSQVGLPPKESAAAAVQEEDMSVHLDEEAPIVTLFWMVIQFLFGWPAYLIMNASGQDYGRWTSHFHTYSPIFEPRNFFDIIISDLGVLAALGALIYASMQLSLLTVTKYYIIPYLFVNFWLVLITFLQHTDPKLPHYREGAWNFQRGALCTVDRSFGKFLDHMFHGIVHTHVAHHLFSQMPFYHAEEATYHLKKLLGEYYVYDPSPIVVAVWRSFRECRFVEDHGDVVFFKK.

A helical transmembrane segment spans residues 91-111 (LAWPAYWIMQGIVCTGIWVLA). Residues 112–116 (HECGH) carry the Histidine box-1 motif. A Histidine box-2 motif is present at residues 148 to 152 (HSKHH). 3 consecutive transmembrane segments (helical) span residues 199-219 (IVTLFWMVIQFLFGWPAYLIM), 245-265 (FFDIIISDLGVLAALGALIYA), and 277-297 (YYIIPYLFVNFWLVLITFLQH). The Histidine box-3 motif lies at 339–343 (HVAHH).

It belongs to the fatty acid desaturase type 1 family.

The protein localises to the membrane. It carries out the reaction (9Z)-octadecenoyl-CoA + 2 Fe(II)-[cytochrome b5] + O2 + 2 H(+) = (9Z,12Z)-octadecadienoyl-CoA + 2 Fe(III)-[cytochrome b5] + 2 H2O. The catalysed reaction is (9Z)-hexadecenoyl-CoA + 2 Fe(II)-[cytochrome b5] + O2 + 2 H(+) = (9Z,12Z)-hexadecadienoyl-CoA + 2 Fe(III)-[cytochrome b5] + 2 H2O. Its pathway is lipid metabolism; polyunsaturated fatty acid biosynthesis. Catalyzes the desaturation of oleic acid (Delta(9)-18:1) to linoleic acid (Delta(9), Delta(12)-18:2). This Mortierella isabellina (Filamentous fungus) protein is Delta(12) fatty acid desaturase.